The sequence spans 106 residues: Photosystem II 5 kDa protein, chloroplastic (106 aa).

The N-terminal 76 residues, Met-1 to Ala-76, are a transit peptide targeting the chloroplast. The cysteines at positions 95 and 104 are disulfide-linked.

In terms of processing, disulfide bond. In terms of tissue distribution, expressed in midvein, lamina and periphery of leaves (at protein level).

It localises to the plastid. The protein localises to the chloroplast thylakoid membrane. In terms of biological role, may be a component of the oxygen-evolving complex. This is Photosystem II 5 kDa protein, chloroplastic from Petunia hybrida (Petunia).